The following is a 425-amino-acid chain: Polyadenylate-binding protein RBP47B' (425 aa).

3 RRM domains span residues 24 to 102, 116 to 195, and 237 to 309; these read RTLW…LNWA, HSIF…AATP, and TTIS…WSKN.

This sequence belongs to the polyadenylate-binding RBP47 family. As to quaternary structure, interacts with the poly(A) tail of mRNA in nucleus.

Its subcellular location is the nucleus. It is found in the cytoplasmic granule. In terms of biological role, heterogeneous nuclear ribonucleoprotein (hnRNP)-protein binding the poly(A) tail of mRNA and probably involved in some steps of pre-mRNA maturation. The sequence is that of Polyadenylate-binding protein RBP47B' (RBP47B') from Arabidopsis thaliana (Mouse-ear cress).